The following is a 306-amino-acid chain: uncharacterized protein (306 aa).

The disordered stretch occupies residues 287-306; that stretch reads DEEGKSEDAKRQEEEKKKSS.

This sequence belongs to the aldo/keto reductase family.

Its subcellular location is the cytoplasm. It is found in the nucleus. This is an uncharacterized protein from Schizosaccharomyces pombe (strain 972 / ATCC 24843) (Fission yeast).